A 350-amino-acid chain; its full sequence is MEIKGLRKIEPYVAGSQPAEKNIIKLNTNENAYGPSPAVHQALASFDAHQLRKYSTLDQTALRQALSDQLGVPTDQFIIGNGSDDILSMAFLAFFNSEEKIIFPDLTYGFYKVWADLYRIPFREVPLTSSFEIDTQDYLVENGGIILTNPNAPTGIYKPLDQVEEIVKANQSVVVIIDESYINFGGETALPLLEKYDNVFITRTFSKDASLAGLRVGYGIGSPKLMAVINAVKNSVNPYNVDSIAEALGTAAVRSWDYYEDICAKIMATRDWFSQELQAIGFDVLPSKTNFVLVKPYGVTAGQLFAYLQSKKIYVRYFPKVERISDRLRISIGTQDEMERVLMTIQELQA.

K207 carries the N6-(pyridoxal phosphate)lysine modification.

This sequence belongs to the class-II pyridoxal-phosphate-dependent aminotransferase family. Histidinol-phosphate aminotransferase subfamily. In terms of assembly, homodimer. Pyridoxal 5'-phosphate serves as cofactor.

The catalysed reaction is L-histidinol phosphate + 2-oxoglutarate = 3-(imidazol-4-yl)-2-oxopropyl phosphate + L-glutamate. The protein operates within amino-acid biosynthesis; L-histidine biosynthesis; L-histidine from 5-phospho-alpha-D-ribose 1-diphosphate: step 7/9. The polypeptide is Histidinol-phosphate aminotransferase (Streptococcus thermophilus (strain ATCC BAA-491 / LMD-9)).